The following is a 205-amino-acid chain: Proteasome subunit beta type-3 (205 aa).

Ser2 is modified (N-acetylserine). Lys77 carries the N6-acetyllysine modification.

This sequence belongs to the peptidase T1B family. In terms of assembly, the 26S proteasome consists of a 20S proteasome core and two 19S regulatory subunits. The 20S proteasome core is a barrel-shaped complex made of 28 subunits that are arranged in four stacked rings. The two outer rings are each formed by seven alpha subunits, and the two inner rings are formed by seven beta subunits. The proteolytic activity is exerted by three beta-subunits PSMB5, PSMB6 and PSMB7. As to expression, detected in liver (at protein level).

The protein resides in the cytoplasm. The protein localises to the nucleus. Functionally, non-catalytic component of the 20S core proteasome complex involved in the proteolytic degradation of most intracellular proteins. This complex plays numerous essential roles within the cell by associating with different regulatory particles. Associated with two 19S regulatory particles, forms the 26S proteasome and thus participates in the ATP-dependent degradation of ubiquitinated proteins. The 26S proteasome plays a key role in the maintenance of protein homeostasis by removing misfolded or damaged proteins that could impair cellular functions, and by removing proteins whose functions are no longer required. Associated with the PA200 or PA28, the 20S proteasome mediates ubiquitin-independent protein degradation. This type of proteolysis is required in several pathways including spermatogenesis (20S-PA200 complex) or generation of a subset of MHC class I-presented antigenic peptides (20S-PA28 complex). The polypeptide is Proteasome subunit beta type-3 (Psmb3) (Mus musculus (Mouse)).